Here is a 1067-residue protein sequence, read N- to C-terminus: Hemoglobin and hemoglobin-haptoglobin-binding protein B (1067 aa).

Positions 1–24 (MTNFKFSLLACSIAFALNASTAYA) are cleaved as a signal peptide. 6 repeat units span residues 26 to 29 (QPTN), 30 to 33 (QPTN), 34 to 37 (QPTN), 38 to 41 (QPTN), 42 to 45 (QPTN), and 46 to 49 (QPTN). The segment at 26 to 49 (QPTNQPTNQPTNQPTNQPTNQPTN) is 6 X 4 AA tandem repeats of Q-P-T-N. Positions 26–51 (QPTNQPTNQPTNQPTNQPTNQPTNQN) are enriched in low complexity. The segment at 26 to 53 (QPTNQPTNQPTNQPTNQPTNQPTNQNSN) is disordered. The TonB box motif lies at 59 to 66 (EQINVSGS). The TBDR plug domain maps to 71-196 (NIKEKKVGET…LGGSVIFETK (126 aa)). The TBDR beta-barrel domain maps to 204 to 1067 (DKDYYLSYKR…NYRMSVQFEF (864 aa)). A TonB C-terminal box motif is present at residues 1050–1067 (NRFYAPGRNYRMSVQFEF).

Belongs to the TonB-dependent receptor family. Hemoglobin/haptoglobin binding protein subfamily.

Its subcellular location is the cell outer membrane. Acts as a receptor for hemoglobin or the hemoglobin/haptoglobin complex of the human host and is required for heme uptake. This is Hemoglobin and hemoglobin-haptoglobin-binding protein B (hgbB) from Haemophilus influenzae.